We begin with the raw amino-acid sequence, 252 residues long: MPTLMYLQEMIRMHAKDKIIVALDVPDLAAGEKLVDRLSPYAGMFKVGLEFFTAAGPAAVRMVKERGGRVFADLKFHDIPNTVAGAARALVRLGVDMLNVHAAGGKAMLQAAAAAVREEAAALNRPAPVIIAVTVLTSLDREALRCEVGIEREVEEQVARWALLAREAGLDGVVASPREIRAIREACGPEFVIVTPGVRPAGSDRGDQRRVMTPAEALREGASYLVIGRPITAAPDPVAAARAIAAEIEMVK.

Substrate contacts are provided by residues Asp-24, Lys-46, Asp-73–Thr-82, Thr-137, Arg-199, Gln-208, Gly-228, and Arg-229. Lys-75 (proton donor) is an active-site residue.

Belongs to the OMP decarboxylase family. Type 1 subfamily. In terms of assembly, homodimer.

It catalyses the reaction orotidine 5'-phosphate + H(+) = UMP + CO2. It functions in the pathway pyrimidine metabolism; UMP biosynthesis via de novo pathway; UMP from orotate: step 2/2. In terms of biological role, catalyzes the decarboxylation of orotidine 5'-monophosphate (OMP) to uridine 5'-monophosphate (UMP). In Moorella thermoacetica (strain ATCC 39073 / JCM 9320), this protein is Orotidine 5'-phosphate decarboxylase.